Reading from the N-terminus, the 508-residue chain is Glutamate--cysteine ligase, chloroplastic (508 aa).

Residues 1–59 (MTTIFRLASSSSPSLRHDATPHNFHIRKTSISNTFSFSSKNSLSFKRILTSGGSRRFIV) constitute a chloroplast transit peptide. 2 disulfide bridges follow: C172–C392 and C335–C350.

This sequence belongs to the carboxylate-amine ligase family. Glutamate--cysteine ligase type 2 subfamily. In terms of assembly, homodimer or monomer when oxidized or reduced, respectively. The Cys-172-Cys-392 disulfide bridge is known to modulate the enzyme activity according to the redox status. The oxidized form constitutes the active enzyme.

The protein resides in the plastid. It localises to the chloroplast. The enzyme catalyses L-cysteine + L-glutamate + ATP = gamma-L-glutamyl-L-cysteine + ADP + phosphate + H(+). It functions in the pathway sulfur metabolism; glutathione biosynthesis; glutathione from L-cysteine and L-glutamate: step 1/2. The polypeptide is Glutamate--cysteine ligase, chloroplastic (GSH1) (Medicago truncatula (Barrel medic)).